Here is a 250-residue protein sequence, read N- to C-terminus: 2,3-bisphosphoglycerate-dependent phosphoglycerate mutase (250 aa).

Substrate is bound by residues 8-15, 21-22, Arg60, 87-90, Lys98, 114-115, and 183-184; these read RHGESEWN, TG, ERHY, RR, and GN. Residue His9 is the Tele-phosphohistidine intermediate of the active site. Glu87 functions as the Proton donor/acceptor in the catalytic mechanism.

It belongs to the phosphoglycerate mutase family. BPG-dependent PGAM subfamily.

It carries out the reaction (2R)-2-phosphoglycerate = (2R)-3-phosphoglycerate. It participates in carbohydrate degradation; glycolysis; pyruvate from D-glyceraldehyde 3-phosphate: step 3/5. Functionally, catalyzes the interconversion of 2-phosphoglycerate and 3-phosphoglycerate. This is 2,3-bisphosphoglycerate-dependent phosphoglycerate mutase from Borrelia duttonii (strain Ly).